A 778-amino-acid chain; its full sequence is E3 UFM1-protein ligase 1 homolog (778 aa).

Residues 404–477 (NNLSTSHDAD…TVQQSAGNTR (74 aa)) form a disordered region. Basic residues predominate over residues 445–457 (KSTKKHQRGRAAA).

It belongs to the UFL1 family.

In terms of biological role, E3 UFM1-protein ligase that mediates ufmylation of target proteins. This chain is E3 UFM1-protein ligase 1 homolog, found in Drosophila virilis (Fruit fly).